The sequence spans 441 residues: UBX domain-containing protein 6 (441 aa).

Positions 1-10 (MKKFFQEIKA) are mediates interaction with LMAN1. Disordered regions lie at residues 12 to 57 (IKFK…MAAA), 62 to 81 (RLEQKQPRARGPTSQDSIRN), and 86 to 113 (ELRAEAAVSGDPEAPGSNTAPEPKEEGS). The segment covering 27–36 (VGEKAPKEKP) has biased composition (basic and acidic residues). Residues 51-63 (EAQMAAAAALARL) are VCP/p97-interacting motif (VIM). In terms of domain architecture, PUB spans 175-244 (VDTIAKYLDN…GPEEFYVLSE (70 aa)). The 77-residue stretch at 332-408 (RKYTYTLLRV…GLVPSALLTF (77 aa)) folds into the UBX domain.

As to quaternary structure, interacts with VCP through the PUB domain (via C-terminus) and VIM motif (via N-terminus); the interaction is direct. Forms a ternary complex with CAV1 and VCP. Interacts with SYVN1. Interacts with HERPUD1. Interacts with VCPKMT. May interact with DERL1. Interacts with PLAA, VCP and YOD1; may form a complex involved in macroautophagy. Interacts with LMAN1.

The protein localises to the cytoplasm. Its subcellular location is the cytosol. It localises to the membrane. It is found in the nucleus. The protein resides in the cytoskeleton. The protein localises to the microtubule organizing center. Its subcellular location is the centrosome. It localises to the early endosome membrane. It is found in the late endosome membrane. The protein resides in the lysosome membrane. Functionally, may negatively regulate the ATPase activity of VCP, an ATP-driven segregase that associates with different cofactors to control a wide variety of cellular processes. As a cofactor of VCP, it may play a role in the transport of CAV1 to lysosomes for degradation. It may also play a role in endoplasmic reticulum-associated degradation (ERAD) of misfolded proteins. Together with VCP and other cofactors, it may play a role in macroautophagy, regulating for instance the clearance of damaged lysosomes. The polypeptide is UBX domain-containing protein 6 (Bos taurus (Bovine)).